The primary structure comprises 204 residues: MSSILLLTSSPRADSLSTPIAVDLAEKLKSQNPGSVVVRRDLAANPLPHIDDLFTGAIRKPPEARTAEETVAVKTSDELVNELLAADTIVISTGLINFNIYSSLKTWIDNVARAGLTFKYTESGPVGLATGKKVYVVLASGGVYSQGPAAPLNHAVPYLKSVLGFLGISDIETIYVEGLAFGPEAAEKAIDAAKSRVQEIALAA.

FMN is bound by residues serine 10 and serine 15–serine 17.

Belongs to the azoreductase type 1 family. Homodimer. Requires FMN as cofactor.

The enzyme catalyses 2 a quinone + NADH + H(+) = 2 a 1,4-benzosemiquinone + NAD(+). The catalysed reaction is N,N-dimethyl-1,4-phenylenediamine + anthranilate + 2 NAD(+) = 2-(4-dimethylaminophenyl)diazenylbenzoate + 2 NADH + 2 H(+). Quinone reductase that provides resistance to thiol-specific stress caused by electrophilic quinones. Its function is as follows. Also exhibits azoreductase activity. Catalyzes the reductive cleavage of the azo bond in aromatic azo compounds to the corresponding amines. This is FMN-dependent NADH:quinone oxidoreductase from Rhizobium johnstonii (strain DSM 114642 / LMG 32736 / 3841) (Rhizobium leguminosarum bv. viciae).